A 454-amino-acid polypeptide reads, in one-letter code: Carbamoyl phosphate synthase arginine-specific small chain (454 aa).

The transit peptide at 1 to 29 (MMFSRFFKAVPARAPAFSSPLPVYQARTM) directs the protein to the mitochondrion. The Glutamine amidotransferase type-1 domain occupies 219–406 (HVAVLDCGVK…IDSVKKYKNS (188 aa)). C295 serves as the catalytic Nucleophile. Active-site residues include H379 and E381.

This sequence belongs to the CarA family. In terms of assembly, heterodimer composed of 2 chains; the small (or glutamine) chain promotes the hydrolysis of glutamine to ammonia, which is used by the large (or ammonia) chain to synthesize carbamoyl phosphate.

Its subcellular location is the mitochondrion matrix. It catalyses the reaction hydrogencarbonate + L-glutamine + 2 ATP + H2O = carbamoyl phosphate + L-glutamate + 2 ADP + phosphate + 2 H(+). It carries out the reaction L-glutamine + H2O = L-glutamate + NH4(+). Its pathway is amino-acid biosynthesis; L-arginine biosynthesis; carbamoyl phosphate from bicarbonate: step 1/1. In terms of biological role, small subunit of the arginine-specific carbamoyl phosphate synthase (CPSase). CPSase catalyzes the formation of carbamoyl phosphate from the ammonia moiety of glutamine, carbonate, and phosphate donated by ATP, the first step of the arginine biosynthetic pathway. The small subunit (glutamine amidotransferase) binds and cleaves glutamine to supply the large subunit with the substrate ammonia. The chain is Carbamoyl phosphate synthase arginine-specific small chain (cpa-1) from Emericella nidulans (strain FGSC A4 / ATCC 38163 / CBS 112.46 / NRRL 194 / M139) (Aspergillus nidulans).